The primary structure comprises 341 residues: tRNA N6-adenosine threonylcarbamoyltransferase (341 aa).

Residues H111 and H115 each coordinate Fe cation. Substrate is bound by residues 134 to 138, D167, G180, and N272; that span reads LVSGG. D300 contacts Fe cation.

It belongs to the KAE1 / TsaD family. Requires Fe(2+) as cofactor.

The protein localises to the cytoplasm. It catalyses the reaction L-threonylcarbamoyladenylate + adenosine(37) in tRNA = N(6)-L-threonylcarbamoyladenosine(37) in tRNA + AMP + H(+). Its function is as follows. Required for the formation of a threonylcarbamoyl group on adenosine at position 37 (t(6)A37) in tRNAs that read codons beginning with adenine. Is involved in the transfer of the threonylcarbamoyl moiety of threonylcarbamoyl-AMP (TC-AMP) to the N6 group of A37, together with TsaE and TsaB. TsaD likely plays a direct catalytic role in this reaction. The protein is tRNA N6-adenosine threonylcarbamoyltransferase of Psychromonas ingrahamii (strain DSM 17664 / CCUG 51855 / 37).